The chain runs to 96 residues: (4S)-4-hydroxy-5-phosphonooxypentane-2,3-dione isomerase (96 aa).

Residues 2 to 91 (HVTLVEINVH…MTGPRTKKVF (90 aa)) form the ABM domain.

The protein belongs to the LsrG family. In terms of assembly, homodimer.

It is found in the cytoplasm. It carries out the reaction (2S)-2-hydroxy-3,4-dioxopentyl phosphate = 3-hydroxy-2,4-dioxopentyl phosphate. In terms of biological role, involved in the degradation of phospho-AI-2, thereby terminating induction of the lsr operon and closing the AI-2 signaling cycle. Catalyzes the conversion of (4S)-4-hydroxy-5-phosphonooxypentane-2,3-dione (P-DPD) to 3-hydroxy-5-phosphonooxypentane-2,4-dione (P-HPD). This chain is (4S)-4-hydroxy-5-phosphonooxypentane-2,3-dione isomerase, found in Salmonella choleraesuis (strain SC-B67).